The primary structure comprises 376 residues: MLGAARRQLGSGPMLGQVLRRLRPATAAAADAARAYSAAAKEMTVREALNSALDEEMSADPSVFLMGEEVGEYQGAYKISKGLLDKYGPERVLDTPITEAGFTGIAVGAAYQGLRPVVEFMTFNFSMQAIDHIINSAAKSNYMSAGQISVPIVFRGPNGAAAGVGAQHSQCYAAWYAHVPGLKVLVPYSAEDARGLLKAAIRDPDPVVFLENELLYGESFPISAEVLDSSFALPIGKAKIEREGKDVTITAYSKMVGYALQAADILSKEGISAEVINLRSIRPLDRATINASVRKTNRLVTIEESFPQHGIGAEICMSVVEESFEYLDAPVERIAGADVPMPYAANLERMAVPQVDDIVRAAKRACYRAVPMAATA.

The N-terminal 36 residues, 1–36 (MLGAARRQLGSGPMLGQVLRRLRPATAAAADAARAY), are a transit peptide targeting the mitochondrion. A thiamine diphosphate-binding site is contributed by Glu99. Residues Ile152, Ala200, Ile201, and Asp203 each contribute to the K(+) site.

In terms of assembly, tetramer of 2 alpha and 2 beta subunits. Requires thiamine diphosphate as cofactor.

It is found in the mitochondrion matrix. The enzyme catalyses N(6)-[(R)-lipoyl]-L-lysyl-[protein] + pyruvate + H(+) = N(6)-[(R)-S(8)-acetyldihydrolipoyl]-L-lysyl-[protein] + CO2. In terms of biological role, the pyruvate dehydrogenase complex catalyzes the overall conversion of pyruvate to acetyl-CoA and CO(2). It contains multiple copies of three enzymatic components: pyruvate dehydrogenase (E1), dihydrolipoamide acetyltransferase (E2) and lipoamide dehydrogenase (E3). This is Pyruvate dehydrogenase E1 component subunit beta-2, mitochondrial from Oryza sativa subsp. japonica (Rice).